A 116-amino-acid chain; its full sequence is Large ribosomal subunit protein bL17 (116 aa).

It belongs to the bacterial ribosomal protein bL17 family. Part of the 50S ribosomal subunit. Contacts protein L32.

This is Large ribosomal subunit protein bL17 from Thermosynechococcus vestitus (strain NIES-2133 / IAM M-273 / BP-1).